The following is a 753-amino-acid chain: 5-methyltetrahydropteroyltriglutamate--homocysteine methyltransferase (753 aa).

5-methyltetrahydropteroyltri-L-glutamate contacts are provided by residues Arg-17 to Lys-20 and Lys-117. Residues Ile-431 to Ser-433 and Glu-484 each bind L-homocysteine. L-methionine is bound by residues Ile-431–Ser-433 and Glu-484. 5-methyltetrahydropteroyltri-L-glutamate contacts are provided by residues Arg-515–Cys-516 and Trp-561. An L-homocysteine-binding site is contributed by Asp-599. Position 599 (Asp-599) interacts with L-methionine. Glu-605 lines the 5-methyltetrahydropteroyltri-L-glutamate pocket. Zn(2+) is bound by residues His-641, Cys-643, and Glu-665. The Proton donor role is filled by His-694. Cys-726 is a binding site for Zn(2+).

The protein belongs to the vitamin-B12 independent methionine synthase family. Zn(2+) serves as cofactor.

It catalyses the reaction 5-methyltetrahydropteroyltri-L-glutamate + L-homocysteine = tetrahydropteroyltri-L-glutamate + L-methionine. It participates in amino-acid biosynthesis; L-methionine biosynthesis via de novo pathway; L-methionine from L-homocysteine (MetE route): step 1/1. Its function is as follows. Catalyzes the transfer of a methyl group from 5-methyltetrahydrofolate to homocysteine resulting in methionine formation. The chain is 5-methyltetrahydropteroyltriglutamate--homocysteine methyltransferase from Shigella boydii serotype 18 (strain CDC 3083-94 / BS512).